A 147-amino-acid chain; its full sequence is Large ribosomal subunit protein uL13 (147 aa).

The protein belongs to the universal ribosomal protein uL13 family. In terms of assembly, part of the 50S ribosomal subunit.

This protein is one of the early assembly proteins of the 50S ribosomal subunit, although it is not seen to bind rRNA by itself. It is important during the early stages of 50S assembly. In Lactobacillus delbrueckii subsp. bulgaricus (strain ATCC 11842 / DSM 20081 / BCRC 10696 / JCM 1002 / NBRC 13953 / NCIMB 11778 / NCTC 12712 / WDCM 00102 / Lb 14), this protein is Large ribosomal subunit protein uL13.